The chain runs to 423 residues: MFSKDLFQESKKFIPGGVSSPVRAFEPYPFFVKKASGSKIYDVDGNKYIDHCLAYGPLILGHADPKVVREVSNQLTIGSAYGTPTENEIILAKEVVDRIPSAEMVRFVNSGGEATMSAIRLARGFTGKDKIIKFDGAYHGAHDYTLVKGEPGKSCVPDTKGIPLDTAKNTYSVPFNDEEALSDLIQKDGDNIACLIMEVVMGNIGCIEPKKGFLEFVRKITEENNILLIFDEVITGFRLARGGAQEYYGVTPDLTTMGKIVGGGLPMGAFAGKKEIMELIAPNGPVYQAGTFSGNPISVQAGISTLKQLDNQFYKDLERKGNFLRSNIQSIIDEQGYNITPVGCGSMFQIYFNPAPVYNNDDAHNSDAKRFLRYFRALLKEGVFIPPSQFECNFISSAHSMEDLTQTAEAIEVALEVAFKKKG.

The residue at position 259 (lysine 259) is an N6-(pyridoxal phosphate)lysine.

This sequence belongs to the class-III pyridoxal-phosphate-dependent aminotransferase family. HemL subfamily. Requires pyridoxal 5'-phosphate as cofactor.

It is found in the cytoplasm. It carries out the reaction (S)-4-amino-5-oxopentanoate = 5-aminolevulinate. It functions in the pathway porphyrin-containing compound metabolism; protoporphyrin-IX biosynthesis; 5-aminolevulinate from L-glutamyl-tRNA(Glu): step 2/2. This Methanobrevibacter smithii (strain ATCC 35061 / DSM 861 / OCM 144 / PS) protein is Glutamate-1-semialdehyde 2,1-aminomutase.